A 294-amino-acid polypeptide reads, in one-letter code: uncharacterized protein (294 aa).

A disordered region spans residues 1-32; the sequence is MSHLKDPTTQYYTGEYPKQKQPTPGIQAKMTP. Lys-39 carries the N6-acetyllysine modification. Position 53–77 (53–77) interacts with NADP(+); sequence LVTGGDSGIGRAAAIAYAREGADVA. Ser-186 provides a ligand contact to substrate. Tyr-199 serves as the catalytic Proton acceptor.

The protein belongs to the short-chain dehydrogenases/reductases (SDR) family.

This is an uncharacterized protein from Escherichia coli (strain K12).